The primary structure comprises 853 residues: Tetratricopeptide repeat protein 27 homolog (853 aa).

The interval 324 to 345 (RQRDDSGDGDNNNEFNRNSSIK) is disordered. The segment covering 332–342 (GDNNNEFNRNS) has biased composition (polar residues). TPR repeat units follow at residues 486–519 (IGAAASAFEIFERLEMWDEAIKCLTFMGKNSRSE), 525–558 (RLEIEPSPELYCVLGDLKSDEQFYIKGWELSKKR), 560–593 (SRAQRSLARFYLEREQYQLCIDAFQIALAINPLF), 594–627 (PNSWFSLGCAAMKIEKWDTALNAFSRVVSLEPEE), 629–661 (EGWANLASIYMYQNKMDKASSALMEGLKHKREN), and 662–695 (WKMWENFLFCCIAIKDYQNAVIAINHIFDLNDKK).

The protein belongs to the TTC27 family.

The polypeptide is Tetratricopeptide repeat protein 27 homolog (ttc27) (Dictyostelium discoideum (Social amoeba)).